Consider the following 356-residue polypeptide: Popeye domain-containing protein 1 (356 aa).

Residues 1-48 (MNFTEPSPLAQSTVVGFLPELESLTPVPSNETSCENWREVHHLVFHAA) are Extracellular-facing. Residues Asn-2 and Asn-30 are each glycosylated (N-linked (GlcNAc...) asparagine). A helical membrane pass occupies residues 49 to 69 (NVCFAVGLLIPTTLHLHMILL). Arg-70 is a topological domain (cytoplasmic). A helical transmembrane segment spans residues 71–91 (VMLSIGCTLYVVWATLYRCAL). Position 92 (Asp-92) is a topological domain, extracellular. A helical membrane pass occupies residues 93-113 (MMIWNSVFLGINILHLSYLLY). The required for interaction with CAV3 stretch occupies residues 93–115 (MMIWNSVFLGINILHLSYLLYKK). Residues 114–356 (KKRPVKIEKD…VPVSPAHQLP (243 aa)) are Cytoplasmic-facing. The interval 136–186 (RVPPDLFRRLTGQFCVIQTLKRGQVYATEDKTSVDDRLSILLKGRMKVSYR) is required for interaction with KCNK2. Ser-295 and Ser-318 each carry phosphoserine. Residues 313-323 (SSSTASLPMSS) are compositionally biased toward low complexity. Residues 313–356 (SSSTASLPMSSPQQRASPKMKPIEEGLEDDDEVFVPVSPAHQLP) are disordered.

Belongs to the popeye family. Homodimer. Homodimerization requires the C-terminus cytoplasmic region. Interacts (via the C-terminus cytoplasmic tail) with TJP1. Interacts (via the C-terminus cytoplasmic tail) with ARHGEF25/GEFT (via the DH domain). Interacts (via the C-terminus cytoplasmic tail) with VAMP3. Interacts with KCNK2; the interaction enhances KCNK2 surface expression and is inhibited by cAMP. Interacts with CAV3. As to expression, strongly expressed in heart and skeletal muscle. Weakly expressed in brain, spleen, liver, kidney and lung.

The protein resides in the lateral cell membrane. Its subcellular location is the cell junction. The protein localises to the tight junction. It localises to the membrane. It is found in the cell membrane. The protein resides in the sarcolemma. Its subcellular location is the caveola. Its function is as follows. Cell adhesion molecule involved in the establishment and/or maintenance of cell integrity. Involved in the formation and regulation of the tight junction (TJ) paracellular permeability barrier in epithelial cells. Plays a role in VAMP3-mediated vesicular transport and recycling of different receptor molecules through its interaction with VAMP3. Plays a role in the regulation of cell shape and movement by modulating the Rho-family GTPase activity through its interaction with ARHGEF25/GEFT. Induces primordial adhesive contact and aggregation of epithelial cells in a Ca(2+)-independent manner. Important for skeletal muscle and heart development. Also involved in striated muscle regeneration and repair and in the regulation of cell spreading. Important for the maintenance of cardiac function. Plays a regulatory function in heart rate dynamics mediated, at least in part, through cAMP-binding and, probably, by increasing cell surface expression of the potassium channel KCNK2 and enhancing current density. Is a caveolae-associated protein important for the preservation of caveolae structural and functional integrity as well as for heart protection against ischemia injury. This chain is Popeye domain-containing protein 1 (Popdc1), found in Rattus norvegicus (Rat).